A 120-amino-acid polypeptide reads, in one-letter code: Large ribosomal subunit protein uL18 (120 aa).

The tract at residues 1–24 is disordered; the sequence is MITKAAKNATRKKRHARVRAKLTG. A compositionally biased stretch (basic residues) spans 9-20; it reads ATRKKRHARVRA.

This sequence belongs to the universal ribosomal protein uL18 family. Part of the 50S ribosomal subunit; part of the 5S rRNA/L5/L18/L25 subcomplex. Contacts the 5S and 23S rRNAs.

This is one of the proteins that bind and probably mediate the attachment of the 5S RNA into the large ribosomal subunit, where it forms part of the central protuberance. In Bacillus mycoides (strain KBAB4) (Bacillus weihenstephanensis), this protein is Large ribosomal subunit protein uL18.